Here is a 244-residue protein sequence, read N- to C-terminus: ATP synthase subunit 4, mitochondrial (244 aa).

Residues 1–36 constitute a mitochondrion transit peptide; the sequence is MASRLAKSAICAARVRPVLSSRTIPAAATTLTSTRS.

This sequence belongs to the eukaryotic ATPase B chain family. As to quaternary structure, F-type ATPases have 2 components, CF(1) - the catalytic core - and CF(0) - the membrane proton channel. In yeast, the dimeric form of ATP synthase consists of 17 polypeptides: alpha, beta, gamma, delta, epsilon, 4 (B), 5 (OSCP), 6 (A), 8, 9 (C), d, E (Tim11), f, g, h, i/j and k.

Its subcellular location is the mitochondrion. The protein resides in the mitochondrion inner membrane. Functionally, mitochondrial membrane ATP synthase (F(1)F(0) ATP synthase or Complex V) produces ATP from ADP in the presence of a proton gradient across the membrane which is generated by electron transport complexes of the respiratory chain. F-type ATPases consist of two structural domains, F(1) - containing the extramembraneous catalytic core, and F(0) - containing the membrane proton channel, linked together by a central stalk and a peripheral stalk. During catalysis, ATP synthesis in the catalytic domain of F(1) is coupled via a rotary mechanism of the central stalk subunits to proton translocation. Part of the complex F(0) domain and the peripheric stalk, which acts as a stator to hold the catalytic alpha(3)beta(3) subcomplex and subunit a/ATP6 static relative to the rotary elements. In Paracoccidioides brasiliensis, this protein is ATP synthase subunit 4, mitochondrial (ATP4).